A 125-amino-acid polypeptide reads, in one-letter code: Phosphoribosyl-AMP cyclohydrolase (125 aa).

Asp-86 serves as a coordination point for Mg(2+). Cys-87 contributes to the Zn(2+) binding site. Mg(2+) is bound by residues Asp-88 and Asp-90. Zn(2+)-binding residues include Cys-103 and Cys-110.

It belongs to the PRA-CH family. Homodimer. The cofactor is Mg(2+). Zn(2+) serves as cofactor.

Its subcellular location is the cytoplasm. It catalyses the reaction 1-(5-phospho-beta-D-ribosyl)-5'-AMP + H2O = 1-(5-phospho-beta-D-ribosyl)-5-[(5-phospho-beta-D-ribosylamino)methylideneamino]imidazole-4-carboxamide. Its pathway is amino-acid biosynthesis; L-histidine biosynthesis; L-histidine from 5-phospho-alpha-D-ribose 1-diphosphate: step 3/9. In terms of biological role, catalyzes the hydrolysis of the adenine ring of phosphoribosyl-AMP. The sequence is that of Phosphoribosyl-AMP cyclohydrolase from Erythrobacter litoralis (strain HTCC2594).